Here is an 80-residue protein sequence, read N- to C-terminus: MKTTILILLILGLGINAKSLEERKSEEEKVFQFLGKIIHHVGNFVHGFSHVFGDDQQDNGKFYGHYAEDNGKHWYDTGDQ.

An N-terminal signal peptide occupies residues 1–19; that stretch reads MKTTILILLILGLGINAKS. Positions 20–29 are excised as a propeptide; sequence LEERKSEEEK. Phe52 carries the phenylalanine amide modification. Residues 54 to 80 constitute a propeptide that is removed on maturation; it reads DDQQDNGKFYGHYAEDNGKHWYDTGDQ.

The protein resides in the secreted. Has antimicrobial activity. In Styela clava (Sea squirt), this protein is Clavanin-A.